We begin with the raw amino-acid sequence, 406 residues long: Cholinephosphotransferase 1 (406 aa).

The residue at position 2 (Ala-2) is an N-acetylalanine. Residues 2 to 62 (AAGAGARPAP…LLQWIPLWMA (61 aa)) lie on the Cytoplasmic side of the membrane. The helical transmembrane segment at 63-83 (PNSITLLGLAINMLTTLVLIS) threads the bilayer. Residue Asn-64 coordinates CDP-choline. The Lumenal segment spans residues 84-93 (YCPTVTEEAP). Residues 94 to 118 (YWTYLLCALGLFIYQSLDAIDGKQA) form a helical membrane-spanning segment. Residues Asp-111 and Asp-114 each coordinate Mg(2+). CDP-choline is bound at residue Arg-119. Over 119-125 (RRTNSCS) the chain is Cytoplasmic. Residues 126–150 (PLGELFDHGCDSLSTVFMAVGASIA) form a helical membrane-spanning segment. Position 132 (Asp-132) interacts with Mg(2+). The active-site Proton acceptor is the His-133. Asp-136 provides a ligand contact to Mg(2+). Over 151–160 (VRLGTHPDWL) the chain is Lumenal. Residues 161–179 (FFCSFIGMFMFYCAHWQTY) form a helical membrane-spanning segment. The Cytoplasmic portion of the chain corresponds to 180–190 (VSGVLRFGKVD). The helical transmembrane segment at 191-207 (VTEIQIALVIVFVLSTF) threads the bilayer. Topologically, residues 208–222 (GGATMWDYTIPILEI) are lumenal. A helical membrane pass occupies residues 223-248 (KLKILPVLGVVGGAIFSCSNYFHVIL). Residues 249–265 (HGGVGKNGSTIAGTSVL) lie on the Cytoplasmic side of the membrane. Residues 266-281 (SPGLHIGIIIILAIMI) traverse the membrane as a helical segment. Over 282–293 (YKKSATNLFEKH) the chain is Lumenal. Residues 294 to 316 (PCLYTLMFGCVFAKVSQKLVIAH) form a helical membrane-spanning segment. At 317 to 329 (MTKSELYLQDTVF) the chain is on the cytoplasmic side. A helical membrane pass occupies residues 330-339 (IGPGLLFLDQ). The Lumenal portion of the chain corresponds to 340 to 346 (YFNNFVD). Residues 347-376 (EYIVLWIAMVISSLDMMRYFSALCLQISRH) form a helical membrane-spanning segment. Residues 377 to 406 (LHLSIFKTSCHQAPEQVQVLPPKSHQNNMD) lie on the Cytoplasmic side of the membrane.

This sequence belongs to the CDP-alcohol phosphatidyltransferase class-I family. Requires Mg(2+) as cofactor. It depends on Mn(2+) as a cofactor.

Its subcellular location is the golgi apparatus membrane. The enzyme catalyses CDP-choline + a 1,2-diacyl-sn-glycerol = a 1,2-diacyl-sn-glycero-3-phosphocholine + CMP + H(+). The catalysed reaction is 1-octadecanoyl-2-(5Z,8Z,11Z,14Z-eicosatetraenoyl)-sn-glycerol + CDP-choline = 1-octadecanoyl-2-(5Z,8Z,11Z,14Z-eicosatetraenoyl)-sn-glycero-3-phosphocholine + CMP + H(+). It carries out the reaction 1-hexadecanoyl-2-(9Z-octadecenoyl)-sn-glycerol + CDP-choline = 1-hexadecanoyl-2-(9Z-octadecenoyl)-sn-glycero-3-phosphocholine + CMP + H(+). It catalyses the reaction 1-hexadecanoyl-2-(4Z,7Z,10Z,13Z,16Z,19Z-docosahexaenoyl)-sn-glycerol + CDP-choline = 1-hexadecanoyl-2-(4Z,7Z,10Z,13Z,16Z,19Z-docosahexaenoyl)-sn-glycero-3-phosphocholine + CMP + H(+). The enzyme catalyses 1,2-dioctanoyl-sn-glycerol + CDP-choline = 1,2-dioctanoyl-sn-glycero-3-phosphocholine + CMP + H(+). It participates in phospholipid metabolism; phosphatidylcholine biosynthesis; phosphatidylcholine from phosphocholine: step 2/2. In terms of biological role, catalyzes the final step of de novo phosphatidylcholine (PC) synthesis, i.e. the transfer of choline phosphate from CDP-choline to the free hydroxyl of a diacylglycerol (DAG), producing a PC. It thereby plays a central role in the formation and maintenance of vesicular membranes. The sequence is that of Cholinephosphotransferase 1 (CHPT1) from Bos taurus (Bovine).